A 637-amino-acid chain; its full sequence is Delta(14)-sterol reductase LBR (637 aa).

The Tudor domain occupies 1-62 (MPNRKYADGE…DIRLQSSFKQ (62 aa)). Topologically, residues 1 to 205 (MPNRKYADGE…KTKELEFGGR (205 aa)) are nuclear. Residues 57-73 (QSSFKQRKSQSSSSSPS) show a composition bias toward low complexity. Residues 57–151 (QSSFKQRKSQ…SKLLEQQKLK (95 aa)) are disordered. Residues 74-97 (RRSRSRSRSRSPGRPAKGRRRSSS) show a composition bias toward basic residues. A phosphoserine; by PKA mark is found at Ser95 and Ser96. Composition is skewed to basic and acidic residues over residues 98–110 (HSRE…KKII) and 124–151 (NTRR…QKLK). The next 8 membrane-spanning stretches (helical) occupy residues 206-226 (FGTF…VLMC), 250-270 (VFGV…LPIG), 288-309 (INGF…YFQF), 317-338 (HFVQ…YLYI), 378-399 (YFCE…MLLA), 403-425 (IHNQ…LYVV), 466-486 (FYLV…ITIL), and 554-574 (PCGF…CLLV).

Belongs to the ERG4/ERG24 family. In terms of assembly, interacts with DNA. Interaction with DNA is sequence independent with higher affinity for supercoiled and relaxed circular DNA than linear DNA.

It is found in the nucleus inner membrane. The protein localises to the nucleus. The protein resides in the cytoplasm. Its subcellular location is the endoplasmic reticulum membrane. The enzyme catalyses 5alpha-cholest-8,14-dien-3beta-ol + NADPH + H(+) = 5alpha-cholest-8-en-3beta-ol + NADP(+). The catalysed reaction is 4,4-dimethyl-5alpha-cholesta-8,24-dien-3beta-ol + NADP(+) = 4,4-dimethyl-5alpha-cholesta-8,14,24-trien-3beta-ol + NADPH + H(+). It carries out the reaction 4,4-dimethyl-8,14-cholestadien-3beta-ol + NADPH + H(+) = 4,4-dimethyl-5alpha-cholest-8-en-3beta-ol + NADP(+). The protein operates within steroid biosynthesis; cholesterol biosynthesis. Its function is as follows. Catalyzes the reduction of the C14-unsaturated bond of lanosterol, as part of the metabolic pathway leading to cholesterol biosynthesis. Anchors the lamina and the heterochromatin to the inner nuclear membrane. The sequence is that of Delta(14)-sterol reductase LBR (LBR) from Gallus gallus (Chicken).